The chain runs to 555 residues: Formate--tetrahydrofolate ligase (555 aa).

ATP is bound at residue T65–T72.

This sequence belongs to the formate--tetrahydrofolate ligase family.

The catalysed reaction is (6S)-5,6,7,8-tetrahydrofolate + formate + ATP = (6R)-10-formyltetrahydrofolate + ADP + phosphate. It functions in the pathway one-carbon metabolism; tetrahydrofolate interconversion. This chain is Formate--tetrahydrofolate ligase, found in Syntrophomonas wolfei subsp. wolfei (strain DSM 2245B / Goettingen).